The sequence spans 1316 residues: DNA-directed RNA polymerase subunit beta' (1316 aa).

Residues cysteine 60, cysteine 62, cysteine 75, and cysteine 78 each coordinate Zn(2+). Positions 535, 537, and 539 each coordinate Mg(2+). Zn(2+)-binding residues include cysteine 891, cysteine 968, cysteine 975, and cysteine 978.

It belongs to the RNA polymerase beta' chain family. As to quaternary structure, the RNAP catalytic core consists of 2 alpha, 1 beta, 1 beta' and 1 omega subunit. When a sigma factor is associated with the core the holoenzyme is formed, which can initiate transcription. The cofactor is Mg(2+). Zn(2+) serves as cofactor.

The enzyme catalyses RNA(n) + a ribonucleoside 5'-triphosphate = RNA(n+1) + diphosphate. DNA-dependent RNA polymerase catalyzes the transcription of DNA into RNA using the four ribonucleoside triphosphates as substrates. The polypeptide is DNA-directed RNA polymerase subunit beta' (Mycobacterium ulcerans (strain Agy99)).